The sequence spans 496 residues: Cobyric acid synthase (496 aa).

One can recognise a GATase cobBQ-type domain in the interval 250-437 (TLKVIAPALP…LHGLFESPQA (188 aa)). Cysteine 331 serves as the catalytic Nucleophile. Histidine 429 is a catalytic residue.

This sequence belongs to the CobB/CobQ family. CobQ subfamily.

Its pathway is cofactor biosynthesis; adenosylcobalamin biosynthesis. Its function is as follows. Catalyzes amidations at positions B, D, E, and G on adenosylcobyrinic A,C-diamide. NH(2) groups are provided by glutamine, and one molecule of ATP is hydrogenolyzed for each amidation. This Hahella chejuensis (strain KCTC 2396) protein is Cobyric acid synthase.